We begin with the raw amino-acid sequence, 437 residues long: Glycogen synthase (437 aa).

Residue Lys-15 participates in ADP-alpha-D-glucose binding.

This sequence belongs to the glycosyltransferase 1 family. Bacterial/plant glycogen synthase subfamily.

The enzyme catalyses [(1-&gt;4)-alpha-D-glucosyl](n) + ADP-alpha-D-glucose = [(1-&gt;4)-alpha-D-glucosyl](n+1) + ADP + H(+). The protein operates within glycan biosynthesis; glycogen biosynthesis. In terms of biological role, synthesizes alpha-1,4-glucan chains using ADP-glucose. The chain is Glycogen synthase from Thermus thermophilus (strain ATCC 27634 / DSM 579 / HB8).